Here is a 165-residue protein sequence, read N- to C-terminus: Cyclic pyranopterin monophosphate synthase (165 aa).

Substrate is bound by residues Leu-76–His-78 and Met-119–Glu-120. Asp-134 is an active-site residue.

Belongs to the MoaC family. As to quaternary structure, homohexamer; trimer of dimers.

It carries out the reaction (8S)-3',8-cyclo-7,8-dihydroguanosine 5'-triphosphate = cyclic pyranopterin phosphate + diphosphate. The protein operates within cofactor biosynthesis; molybdopterin biosynthesis. Its function is as follows. Catalyzes the conversion of (8S)-3',8-cyclo-7,8-dihydroguanosine 5'-triphosphate to cyclic pyranopterin monophosphate (cPMP). This Photobacterium profundum (strain SS9) protein is Cyclic pyranopterin monophosphate synthase.